Here is a 358-residue protein sequence, read N- to C-terminus: SPbeta prophage-derived probable integrase/recombinase YopP (358 aa).

Positions 23 to 114 constitute a Core-binding (CB) domain; the sequence is NKDIRSSSGN…SLKMLYTYLE (92 aa). Residues 137–319 enclose the Tyr recombinase domain; it reads KNWDKTTQTE…NIANSAGVTM (183 aa). Residues arginine 178, lysine 206, histidine 268, and histidine 295 contribute to the active site. Tyrosine 304 functions as the O-(3'-phospho-DNA)-tyrosine intermediate in the catalytic mechanism.

This sequence belongs to the 'phage' integrase family.

In terms of biological role, probable recombinase that does not seem to have a role in chromosome dimer resolution per se but rather may have some facilitative role during chromosome partitioning in general. The chain is SPbeta prophage-derived probable integrase/recombinase YopP (yopP) from Bacillus subtilis (strain 168).